A 106-amino-acid polypeptide reads, in one-letter code: uncharacterized protein (106 aa).

This sequence belongs to the HesB/IscA family.

This is an uncharacterized protein from Bradyrhizobium diazoefficiens (strain JCM 10833 / BCRC 13528 / IAM 13628 / NBRC 14792 / USDA 110).